The primary structure comprises 205 residues: MEINYELYLITDRRFLKGRQLKKVVEDAILGGVTIVQVREKDVSTKEFYNVAKEVKEVTDYYRVPIIINDRLDIAQAIDANGVHLGQKDMHLNIAREILGKDKIIGISVGNVKEALEAQNNGADYLGIGTIFPTGSKKDVDAIIGIDGLSKIKDSISIPSVAIGGINKTNFKDVLKTGIEGISVISAILDEDDIKLAANNLLINK.

4-amino-2-methyl-5-(diphosphooxymethyl)pyrimidine is bound by residues 37-41 (QVREK) and Asn-69. The Mg(2+) site is built by Asp-70 and Asp-89. Ser-108 serves as a coordination point for 4-amino-2-methyl-5-(diphosphooxymethyl)pyrimidine. Residue 134-136 (TGS) participates in 2-[(2R,5Z)-2-carboxy-4-methylthiazol-5(2H)-ylidene]ethyl phosphate binding. Residue Lys-137 coordinates 4-amino-2-methyl-5-(diphosphooxymethyl)pyrimidine. Residues Gly-165 and 185–186 (IS) each bind 2-[(2R,5Z)-2-carboxy-4-methylthiazol-5(2H)-ylidene]ethyl phosphate.

Belongs to the thiamine-phosphate synthase family. It depends on Mg(2+) as a cofactor.

It carries out the reaction 2-[(2R,5Z)-2-carboxy-4-methylthiazol-5(2H)-ylidene]ethyl phosphate + 4-amino-2-methyl-5-(diphosphooxymethyl)pyrimidine + 2 H(+) = thiamine phosphate + CO2 + diphosphate. The catalysed reaction is 2-(2-carboxy-4-methylthiazol-5-yl)ethyl phosphate + 4-amino-2-methyl-5-(diphosphooxymethyl)pyrimidine + 2 H(+) = thiamine phosphate + CO2 + diphosphate. It catalyses the reaction 4-methyl-5-(2-phosphooxyethyl)-thiazole + 4-amino-2-methyl-5-(diphosphooxymethyl)pyrimidine + H(+) = thiamine phosphate + diphosphate. Its pathway is cofactor biosynthesis; thiamine diphosphate biosynthesis; thiamine phosphate from 4-amino-2-methyl-5-diphosphomethylpyrimidine and 4-methyl-5-(2-phosphoethyl)-thiazole: step 1/1. In terms of biological role, condenses 4-methyl-5-(beta-hydroxyethyl)thiazole monophosphate (THZ-P) and 2-methyl-4-amino-5-hydroxymethyl pyrimidine pyrophosphate (HMP-PP) to form thiamine monophosphate (TMP). This is Thiamine-phosphate synthase from Clostridium botulinum (strain 657 / Type Ba4).